Consider the following 32-residue polypeptide: Fibrinolytic enzyme 2 (32 aa).

The region spanning 1–32 (ISGTSMSCPHVAGRAYVLDTSLRVYLLDTGLR) is the Peptidase S8 domain. Catalysis depends on S5, which acts as the Charge relay system.

The protein belongs to the peptidase S8 family.

Inhibited by PMSF. Not inhibited by benzamidine, aprotinin, SBTI, EDTA, EGTA, 2-mercaptoethanol, iodoacetic acid or pepstatin A. Its function is as follows. Serine protease. Has fibrinolytic and fibrinogenolytic but no plasminogenolytic activity. Cleaves after Arg and Lys residues. Cleaves fibrinogen alpha chain, beta chain and gamma chain in that order. The protein is Fibrinolytic enzyme 2 of Hediste japonica (Polychaete worm).